Consider the following 470-residue polypeptide: uncharacterized protein (470 aa).

Residues M1–R69 form the HTH gntR-type domain. At K313 the chain carries N6-(pyridoxal phosphate)lysine.

It in the C-terminal section; belongs to the class-I pyridoxal-phosphate-dependent aminotransferase family.

This is an uncharacterized protein from Escherichia coli (strain K12).